Here is a 278-residue protein sequence, read N- to C-terminus: Acyl-[acyl-carrier-protein]--UDP-N-acetylglucosamine O-acyltransferase (278 aa).

It belongs to the transferase hexapeptide repeat family. LpxA subfamily. In terms of assembly, homotrimer.

The protein localises to the cytoplasm. It catalyses the reaction a (3R)-hydroxyacyl-[ACP] + UDP-N-acetyl-alpha-D-glucosamine = a UDP-3-O-[(3R)-3-hydroxyacyl]-N-acetyl-alpha-D-glucosamine + holo-[ACP]. Its pathway is glycolipid biosynthesis; lipid IV(A) biosynthesis; lipid IV(A) from (3R)-3-hydroxytetradecanoyl-[acyl-carrier-protein] and UDP-N-acetyl-alpha-D-glucosamine: step 1/6. Its function is as follows. Involved in the biosynthesis of lipid A, a phosphorylated glycolipid that anchors the lipopolysaccharide to the outer membrane of the cell. This chain is Acyl-[acyl-carrier-protein]--UDP-N-acetylglucosamine O-acyltransferase, found in Brucella abortus (strain S19).